Consider the following 308-residue polypeptide: Putative transposon Ty5-1 protein YCL074W (308 aa).

The protein is Putative transposon Ty5-1 protein YCL074W (TY5A) of Saccharomyces cerevisiae (strain ATCC 204508 / S288c) (Baker's yeast).